We begin with the raw amino-acid sequence, 282 residues long: Blarina toxin (282 aa).

The signal sequence occupies residues 1–17; sequence MCFLLLCLTLTLAGTGA. Positions 18-29 are cleaved as a propeptide — activation peptide; sequence VPTGPSIEIHSR. The Peptidase S1 domain maps to 30-279; sequence IIGGWECDKH…YISWIQETIK (250 aa). 5 disulfide bridges follow: Cys-36-Cys-194, Cys-57-Cys-73, Cys-170-Cys-240, Cys-205-Cys-219, and Cys-230-Cys-255. Residue His-72 is the Charge relay system of the active site. Ser-100 carries an O-linked (GalNAc...) serine glycan. Asn-109 and Asn-122 each carry an N-linked (GlcNAc...) asparagine glycan. Asp-138 serves as the catalytic Charge relay system. Ser-234 serves as the catalytic Charge relay system.

The protein belongs to the peptidase S1 family. Kallikrein subfamily. As to expression, submaxillary and sublingual salivary glands.

The protein resides in the secreted. Its activity is regulated as follows. Strongly inhibited by aprotinin, moderately inhibited by secretory leukoprotease inhibitor, the Kunitz-type soybean trypsin inhibitor, and leupeptin, and not inhibited by urinary trypsin inhibitor or alpha-1 protease inhibitor. Its function is as follows. Has kallikrein-like activity, converts kininogens to kinins, and has dilatory effects on the blood vessel walls. Shows highest activity toward Pro-Phe-Arg-MCA and Boc-Val-Leu-Lys-MCA in vitro. Has preference for Arg and Lys in position P1 and hydrophobic residues in position P2. The protein is Blarina toxin (BTX) of Blarina brevicauda (Northern short-tailed shrew).